Here is a 251-residue protein sequence, read N- to C-terminus: Flap endonuclease Xni (251 aa).

D104 contacts Mg(2+). One can recognise a 5'-3' exonuclease domain in the interval 160–249; the sequence is VQPQQLPDYW…IDGNLQQLRL (90 aa). K(+)-binding residues include L171, A172, P180, V182, and I185. Positions 184–189 are interaction with DNA; sequence GIGPKS.

This sequence belongs to the Xni family. Mg(2+) serves as cofactor. K(+) is required as a cofactor.

Functionally, has flap endonuclease activity. During DNA replication, flap endonucleases cleave the 5'-overhanging flap structure that is generated by displacement synthesis when DNA polymerase encounters the 5'-end of a downstream Okazaki fragment. The chain is Flap endonuclease Xni from Shigella flexneri serotype 5b (strain 8401).